Here is a 1017-residue protein sequence, read N- to C-terminus: Probable disease resistance protein RDL5 (1017 aa).

Positions 25–52 (QGVEDQVTELKRDLNMLSSFLKDANAKK) form a coiled coil. Positions 147–460 (KQREMRQKFS…AEGIFQPRHY (314 aa)) constitute an NB-ARC domain. ATP is bound at residue 190 to 197 (GMGGLGKT). LRR repeat units follow at residues 602–627 (LIHL…NLKL), 649–674 (MQEL…NLVK), 675–699 (LETL…RLST), 768–791 (PSHL…ILEK), 792–819 (LLQL…GFPQ), 841–865 (MPLL…HLPS), and 937–962 (MPFL…QFIY).

This sequence belongs to the disease resistance NB-LRR family.

In terms of biological role, potential disease resistance protein. This Arabidopsis thaliana (Mouse-ear cress) protein is Probable disease resistance protein RDL5 (RDL5).